The primary structure comprises 69 residues: Cytochrome c oxidase subunit 8A, mitochondrial (69 aa).

A mitochondrion-targeting transit peptide spans 1 to 25 (MSVLTSLLLRGLTGSARRLPVPRAK). Residues 26–36 (VHSMPPEEELG) lie on the Mitochondrial matrix side of the membrane. Residues 37–60 (IMEKAIGLTFCFVSLFLPAGWILS) traverse the membrane as a helical segment. The Mitochondrial intermembrane portion of the chain corresponds to 61 to 69 (HLEDYKRPE).

Belongs to the cytochrome c oxidase VIII family. Component of the cytochrome c oxidase (complex IV, CIV), a multisubunit enzyme composed of 14 subunits. The complex is composed of a catalytic core of 3 subunits MT-CO1, MT-CO2 and MT-CO3, encoded in the mitochondrial DNA, and 11 supernumerary subunits COX4I, COX5A, COX5B, COX6A, COX6B, COX6C, COX7A, COX7B, COX7C, COX8 and NDUFA4, which are encoded in the nuclear genome. The complex exists as a monomer or a dimer and forms supercomplexes (SCs) in the inner mitochondrial membrane with NADH-ubiquinone oxidoreductase (complex I, CI) and ubiquinol-cytochrome c oxidoreductase (cytochrome b-c1 complex, complex III, CIII), resulting in different assemblies (supercomplex SCI(1)III(2)IV(1) and megacomplex MCI(2)III(2)IV(2)). In terms of processing, in response to mitochondrial stress, the precursor protein is ubiquitinated by the SIFI complex in the cytoplasm before mitochondrial import, leading to its degradation. Within the SIFI complex, UBR4 initiates ubiquitin chain that are further elongated or branched by KCMF1.

The protein localises to the mitochondrion inner membrane. Its pathway is energy metabolism; oxidative phosphorylation. Component of the cytochrome c oxidase, the last enzyme in the mitochondrial electron transport chain which drives oxidative phosphorylation. The respiratory chain contains 3 multisubunit complexes succinate dehydrogenase (complex II, CII), ubiquinol-cytochrome c oxidoreductase (cytochrome b-c1 complex, complex III, CIII) and cytochrome c oxidase (complex IV, CIV), that cooperate to transfer electrons derived from NADH and succinate to molecular oxygen, creating an electrochemical gradient over the inner membrane that drives transmembrane transport and the ATP synthase. Cytochrome c oxidase is the component of the respiratory chain that catalyzes the reduction of oxygen to water. Electrons originating from reduced cytochrome c in the intermembrane space (IMS) are transferred via the dinuclear copper A center (CU(A)) of subunit 2 and heme A of subunit 1 to the active site in subunit 1, a binuclear center (BNC) formed by heme A3 and copper B (CU(B)). The BNC reduces molecular oxygen to 2 water molecules using 4 electrons from cytochrome c in the IMS and 4 protons from the mitochondrial matrix. The chain is Cytochrome c oxidase subunit 8A, mitochondrial (COX8A) from Macaca fascicularis (Crab-eating macaque).